Here is a 560-residue protein sequence, read N- to C-terminus: MTVKPAKAASLARNLAKRRRTYLGGAAGRSQEPEVPCAAVLPGKPGDRNCPEFPPPDRTLGCWATDAAPAAGLCGAGSEPSIAPTSCAGNLPSRPPPLLSPLLASRNPCPWHYLHLSGSHNTLAPTCFKAKLHRKRGSQPPDMASALTDRTSRAPSTYTYTSRPRALPCQRSRYRDSLTQPDEEPMHYGNIMYDRRVIRGNTYALQTGPLLGRPDSLELQRQREARKRALARKQAQEQLRPQTPEPVEGRKHVDVQTELYLEEIADRIIEVDMECQTDAFLDRPPTPLFIPAKTGKDVATQILEGELFDFDLEVKPVLEVLVGKTIEQSLLEVMEEEELANLRASQREYEELRNSERAEVQRLEEQERRHREEKERRKKQQWEIMHKHNETSQKIAARAFAQRYLADLLPSVFGSLRDSGYFYDPIERDIEIGFLPWLMNEVEKTMEYSMVGRTVLDMLIREVVEKRLCMYEHGEDTHQSPEPEDEPGGPGAMTESLEASEFLEQSMSQTRELLLDGGYLQRTTYDRRSSQERKFMEERELLGQDEETAMRKSLGEEELS.

Disordered stretches follow at residues 134–186 (RKRG…EEPM) and 225–249 (ARKRALARKQAQEQLRPQTPEPVEG). Over residues 153 to 162 (RAPSTYTYTS) the composition is skewed to polar residues. Positions 215–239 (DSLELQRQREARKRALARKQAQEQL) form a coiled coil. Threonine 286 bears the Phosphothreonine; by MAPK1 mark. Residues 331-385 (LEVMEEEELANLRASQREYEELRNSERAEVQRLEEQERRHREEKERRKKQQWEIM) adopt a coiled-coil conformation. Disordered stretches follow at residues 354 to 375 (NSERAEVQRLEEQERRHREEKE), 473 to 498 (HGEDTHQSPEPEDEPGGPGAMTESLE), and 526 to 560 (DRRSSQERKFMEERELLGQDEETAMRKSLGEEELS).

Belongs to the flagellar radial spoke RSP3 family. As to quaternary structure, component of the axonemal radial spoke 1 (RS1) and 2 (RS2) complexes, at least composed of spoke head proteins RSPH1, RSPH3, RSPH9 and the cilia-specific component RSPH4A or sperm-specific component RSPH6A, spoke stalk proteins RSPH14, DNAJB13, DYDC1, ROPN1L and NME5, and the RS1 complex-specific anchor protein IQUB. Interacts with IQUB. Interacts with phosphorylated MAPK1. Interacts with MEK1. Interacts with PKA regulatory subunits PRKAR1A and PRKAR1B. Interacts with RSPH1. Interacts with RSPH4A. Interacts with RSPH6A. Interacts with RSPH9. Interacts with LRRC23.

It is found in the cytoplasm. Its subcellular location is the cytoskeleton. It localises to the cilium axoneme. The protein localises to the flagellum axoneme. Its function is as follows. Functions as part of axonemal radial spoke complexes that play an important part in the motility of sperm and cilia. Functions as a protein kinase A-anchoring protein that scaffolds the cAMP-dependent protein kinase holoenzyme. May serve as a point of convergence for MAPK and PKA signaling in cilia. The chain is Radial spoke head protein 3 homolog (RSPH3) from Homo sapiens (Human).